A 221-amino-acid chain; its full sequence is UPF0758 protein YicR (221 aa).

Positions alanine 99–isoleucine 221 constitute an MPN domain. Residues histidine 170, histidine 172, and aspartate 183 each contribute to the Zn(2+) site. Residues histidine 170–aspartate 183 carry the JAMM motif motif.

This sequence belongs to the UPF0758 family. YicR subfamily.

The sequence is that of UPF0758 protein YicR from Salmonella agona (strain SL483).